The chain runs to 133 residues: Small ribosomal subunit protein uS8 (133 aa).

Belongs to the universal ribosomal protein uS8 family. Part of the 30S ribosomal subunit. Contacts proteins S5 and S12.

Its function is as follows. One of the primary rRNA binding proteins, it binds directly to 16S rRNA central domain where it helps coordinate assembly of the platform of the 30S subunit. This chain is Small ribosomal subunit protein uS8, found in Deinococcus radiodurans (strain ATCC 13939 / DSM 20539 / JCM 16871 / CCUG 27074 / LMG 4051 / NBRC 15346 / NCIMB 9279 / VKM B-1422 / R1).